Here is a 544-residue protein sequence, read N- to C-terminus: BTB/POZ domain-containing protein At2g13690 (544 aa).

2 disordered regions span residues 34–66 and 82–111; these read ASPDTRSISSRNHIPAKSQQQRPKLVPCSPQSS and LSPGRVSPIDSDPTVTTMQETETTQEEEDD. Polar residues predominate over residues 37–55; that stretch reads DTRSISSRNHIPAKSQQQR. Positions 93–103 are enriched in low complexity; that stretch reads DPTVTTMQETE. The 84-residue stretch at 142–225 folds into the BTB domain; sequence YDARLSLKGR…MFEESNVIIK (84 aa).

It functions in the pathway protein modification; protein ubiquitination. Its function is as follows. May act as a substrate-specific adapter of an E3 ubiquitin-protein ligase complex (CUL3-RBX1-BTB) which mediates the ubiquitination and subsequent proteasomal degradation of target proteins. This is BTB/POZ domain-containing protein At2g13690 (PRL1-IFG) from Arabidopsis thaliana (Mouse-ear cress).